The sequence spans 936 residues: Protein NLP2 (936 aa).

Positions 99 to 130 are disordered; it reads IMSVNPTEAEKTGKSSGELGSDDGAHQGSSMV. In terms of domain architecture, RWP-RK spans 550-635; it reads QPSSIGHAEK…INSVHGVDRS (86 aa). 3 disordered regions span residues 666–697, 753–782, and 794–827; these read PSVG…SCQL, CTNP…IQQE, and DKDH…RSAL. Residues 671 to 682 show a composition bias toward basic and acidic residues; it reads TVEENSDLKSEE. Over residues 688 to 697 the composition is skewed to polar residues; the sequence is DGSQRQSCQL. Over residues 754–769 the composition is skewed to low complexity; sequence TNPSSSLRPSSESTRN. The segment covering 770–781 has biased composition (polar residues); that stretch reads QIVGRNSPSIQQ. The span at 801 to 815 shows a compositional bias: low complexity; it reads STSGMTDSSSGSASS. The segment covering 816–825 has biased composition (polar residues); that stretch reads HPTFKQNTRS. A PB1 domain is found at 834–916; the sequence is ALTVKATYNG…RIVKLQVRDL (83 aa).

It is found in the nucleus. In terms of biological role, probable transcription factor. The chain is Protein NLP2 from Oryza sativa subsp. japonica (Rice).